A 388-amino-acid polypeptide reads, in one-letter code: Dual-specificity RNA methyltransferase RlmN (388 aa).

E109 functions as the Proton acceptor in the catalytic mechanism. One can recognise a Radical SAM core domain in the interval 115–354 (EDDRATLCVS…TIVRKTRGDD (240 aa)). An intrachain disulfide couples C122 to C359. C129, C133, and C136 together coordinate [4Fe-4S] cluster. S-adenosyl-L-methionine-binding positions include 183-184 (GE), S215, 237-239 (SLH), and N316. The active-site S-methylcysteine intermediate is the C359.

This sequence belongs to the radical SAM superfamily. RlmN family. It depends on [4Fe-4S] cluster as a cofactor.

It localises to the cytoplasm. It catalyses the reaction adenosine(2503) in 23S rRNA + 2 reduced [2Fe-2S]-[ferredoxin] + 2 S-adenosyl-L-methionine = 2-methyladenosine(2503) in 23S rRNA + 5'-deoxyadenosine + L-methionine + 2 oxidized [2Fe-2S]-[ferredoxin] + S-adenosyl-L-homocysteine. The enzyme catalyses adenosine(37) in tRNA + 2 reduced [2Fe-2S]-[ferredoxin] + 2 S-adenosyl-L-methionine = 2-methyladenosine(37) in tRNA + 5'-deoxyadenosine + L-methionine + 2 oxidized [2Fe-2S]-[ferredoxin] + S-adenosyl-L-homocysteine. Its function is as follows. Specifically methylates position 2 of adenine 2503 in 23S rRNA and position 2 of adenine 37 in tRNAs. m2A2503 modification seems to play a crucial role in the proofreading step occurring at the peptidyl transferase center and thus would serve to optimize ribosomal fidelity. This Salmonella arizonae (strain ATCC BAA-731 / CDC346-86 / RSK2980) protein is Dual-specificity RNA methyltransferase RlmN.